Consider the following 62-residue polypeptide: uncharacterized protein (62 aa).

A run of 2 helical transmembrane segments spans residues 9–29 and 42–62; these read HNEL…ALIG and AAVV…LQLL.

It is found in the membrane. This is an uncharacterized protein from Saccharomyces cerevisiae (strain ATCC 204508 / S288c) (Baker's yeast).